A 371-amino-acid polypeptide reads, in one-letter code: UDP-N-acetylglucosamine--N-acetylmuramyl-(pentapeptide) pyrophosphoryl-undecaprenol N-acetylglucosamine transferase (371 aa).

UDP-N-acetyl-alpha-D-glucosamine contacts are provided by residues 15-17 (TGG), Asn-126, Arg-172, Ser-199, Ile-256, 275-280 (ALTVSE), and Gln-301.

This sequence belongs to the glycosyltransferase 28 family. MurG subfamily.

It is found in the cell inner membrane. The catalysed reaction is di-trans,octa-cis-undecaprenyl diphospho-N-acetyl-alpha-D-muramoyl-L-alanyl-D-glutamyl-meso-2,6-diaminopimeloyl-D-alanyl-D-alanine + UDP-N-acetyl-alpha-D-glucosamine = di-trans,octa-cis-undecaprenyl diphospho-[N-acetyl-alpha-D-glucosaminyl-(1-&gt;4)]-N-acetyl-alpha-D-muramoyl-L-alanyl-D-glutamyl-meso-2,6-diaminopimeloyl-D-alanyl-D-alanine + UDP + H(+). It functions in the pathway cell wall biogenesis; peptidoglycan biosynthesis. Functionally, cell wall formation. Catalyzes the transfer of a GlcNAc subunit on undecaprenyl-pyrophosphoryl-MurNAc-pentapeptide (lipid intermediate I) to form undecaprenyl-pyrophosphoryl-MurNAc-(pentapeptide)GlcNAc (lipid intermediate II). This Francisella tularensis subsp. holarctica (strain FTNF002-00 / FTA) protein is UDP-N-acetylglucosamine--N-acetylmuramyl-(pentapeptide) pyrophosphoryl-undecaprenol N-acetylglucosamine transferase.